Reading from the N-terminus, the 409-residue chain is Argininosuccinate synthase (409 aa).

Residues 10-18 and Ala-37 contribute to the ATP site; that span reads AYSGGLDTS. L-citrulline contacts are provided by Tyr-90 and Ser-95. Gly-120 lines the ATP pocket. Positions 122, 126, and 127 each coordinate L-aspartate. Position 126 (Asn-126) interacts with L-citrulline. Residues Arg-130, Ser-182, Ser-191, Glu-267, and Tyr-279 each contribute to the L-citrulline site.

It belongs to the argininosuccinate synthase family. Type 1 subfamily. As to quaternary structure, homotetramer.

The protein localises to the cytoplasm. It catalyses the reaction L-citrulline + L-aspartate + ATP = 2-(N(omega)-L-arginino)succinate + AMP + diphosphate + H(+). The protein operates within amino-acid biosynthesis; L-arginine biosynthesis; L-arginine from L-ornithine and carbamoyl phosphate: step 2/3. The polypeptide is Argininosuccinate synthase (Thiobacillus denitrificans (strain ATCC 25259 / T1)).